The sequence spans 268 residues: UPF0328 protein ECU03_0040 (268 aa).

Belongs to the UPF0328 family.

This Encephalitozoon cuniculi (strain GB-M1) (Microsporidian parasite) protein is UPF0328 protein ECU03_0040.